The sequence spans 159 residues: uncharacterized protein (159 aa).

3 helical membrane passes run 76–96 (AIKYLIEGLAVAFVAYYFIGK), 104–124 (IVMLGITAACVFAILDVFSPT), and 131–151 (FGAGFGIGTSLFGLNPAVIGG).

The protein localises to the membrane. This is an uncharacterized protein from Acanthamoeba polyphaga (Amoeba).